Reading from the N-terminus, the 610-residue chain is Glutamine--fructose-6-phosphate aminotransferase [isomerizing] (610 aa).

C2 functions as the Nucleophile; for GATase activity in the catalytic mechanism. Residues 2-218 (CGIVGAVAQR…EGDVAEITRR (217 aa)) form the Glutamine amidotransferase type-2 domain. SIS domains are found at residues 286 to 426 (AVEI…QQNR) and 459 to 600 (LAPD…VDQP). The For Fru-6P isomerization activity role is filled by K605.

As to quaternary structure, homodimer.

The protein localises to the cytoplasm. It carries out the reaction D-fructose 6-phosphate + L-glutamine = D-glucosamine 6-phosphate + L-glutamate. In terms of biological role, catalyzes the first step in hexosamine metabolism, converting fructose-6P into glucosamine-6P using glutamine as a nitrogen source. The chain is Glutamine--fructose-6-phosphate aminotransferase [isomerizing] from Aliivibrio fischeri (strain ATCC 700601 / ES114) (Vibrio fischeri).